Consider the following 426-residue polypeptide: 3-phosphoshikimate 1-carboxyvinyltransferase (426 aa).

Residues K21, S22, and R26 each contribute to the 3-phosphoshikimate site. Position 21 (K21) interacts with phosphoenolpyruvate. Phosphoenolpyruvate is bound by residues G93 and R121. Residues S165, Q167, D313, and K340 each contribute to the 3-phosphoshikimate site. Q167 serves as a coordination point for phosphoenolpyruvate. The active-site Proton acceptor is D313. 2 residues coordinate phosphoenolpyruvate: R344 and R386.

It belongs to the EPSP synthase family. In terms of assembly, monomer.

The protein resides in the cytoplasm. It carries out the reaction 3-phosphoshikimate + phosphoenolpyruvate = 5-O-(1-carboxyvinyl)-3-phosphoshikimate + phosphate. It functions in the pathway metabolic intermediate biosynthesis; chorismate biosynthesis; chorismate from D-erythrose 4-phosphate and phosphoenolpyruvate: step 6/7. In terms of biological role, catalyzes the transfer of the enolpyruvyl moiety of phosphoenolpyruvate (PEP) to the 5-hydroxyl of shikimate-3-phosphate (S3P) to produce enolpyruvyl shikimate-3-phosphate and inorganic phosphate. The chain is 3-phosphoshikimate 1-carboxyvinyltransferase from Solibacter usitatus (strain Ellin6076).